The primary structure comprises 133 residues: Cytidine deaminase (133 aa).

Residues 4–126 enclose the CMP/dCMP-type deaminase domain; the sequence is VDWNMLRGNA…DLLPDAFGLD (123 aa). 45 to 47 is a binding site for substrate; the sequence is NVE. Position 56 (C56) interacts with Zn(2+). The active-site Proton donor is the E58. Zn(2+)-binding residues include C89 and C92.

The protein belongs to the cytidine and deoxycytidylate deaminase family. Homotetramer. Requires Zn(2+) as cofactor.

It carries out the reaction cytidine + H2O + H(+) = uridine + NH4(+). The catalysed reaction is 2'-deoxycytidine + H2O + H(+) = 2'-deoxyuridine + NH4(+). Its function is as follows. Recycles cytidine and 2-deoxycytidine for uridine and 2-deoxyuridine synthesis, respectively. Catalyzes the hydrolytic deamination of cytidine and 2-deoxycytidine to form, respectively, uridine and 2-deoxyuridine. The protein is Cytidine deaminase (cdd) of Mycobacterium tuberculosis (strain CDC 1551 / Oshkosh).